Consider the following 934-residue polypeptide: Bifunctional uridylyltransferase/uridylyl-removing enzyme (934 aa).

The interval 1–379 (MSAHDLKLEE…TFSRRKRKLS (379 aa)) is uridylyltransferase. The interval 380 to 736 (DDGAFISENH…AKPHAFEAVT (357 aa)) is uridylyl-removing. One can recognise an HD domain in the interval 496-613 (VDEHLLRCIA…IDFADTVQTM (118 aa)). ACT domains lie at 737–818 (EITV…DMLA) and 848–931 (VIEV…RSPQ).

This sequence belongs to the GlnD family. The cofactor is Mg(2+).

It catalyses the reaction [protein-PII]-L-tyrosine + UTP = [protein-PII]-uridylyl-L-tyrosine + diphosphate. The enzyme catalyses [protein-PII]-uridylyl-L-tyrosine + H2O = [protein-PII]-L-tyrosine + UMP + H(+). Its activity is regulated as follows. Uridylyltransferase (UTase) activity is inhibited by glutamine, while glutamine activates uridylyl-removing (UR) activity. In terms of biological role, modifies, by uridylylation and deuridylylation, the PII regulatory proteins (GlnB and homologs), in response to the nitrogen status of the cell that GlnD senses through the glutamine level. Under low glutamine levels, catalyzes the conversion of the PII proteins and UTP to PII-UMP and PPi, while under higher glutamine levels, GlnD hydrolyzes PII-UMP to PII and UMP (deuridylylation). Thus, controls uridylylation state and activity of the PII proteins, and plays an important role in the regulation of nitrogen assimilation and metabolism. This is Bifunctional uridylyltransferase/uridylyl-removing enzyme from Brucella abortus (strain S19).